The following is an 88-amino-acid chain: Cold-regulated protein BLT14 (88 aa).

The polypeptide is Cold-regulated protein BLT14 (BLT14) (Hordeum vulgare (Barley)).